The chain runs to 415 residues: Methylthioribose-1-phosphate isomerase (415 aa).

Aspartate 284 (proton donor) is an active-site residue.

Belongs to the eIF-2B alpha/beta/delta subunits family. MtnA subfamily.

The protein resides in the cytoplasm. Its subcellular location is the nucleus. It carries out the reaction 5-(methylsulfanyl)-alpha-D-ribose 1-phosphate = 5-(methylsulfanyl)-D-ribulose 1-phosphate. It functions in the pathway amino-acid biosynthesis; L-methionine biosynthesis via salvage pathway; L-methionine from S-methyl-5-thio-alpha-D-ribose 1-phosphate: step 1/6. In terms of biological role, catalyzes the interconversion of methylthioribose-1-phosphate (MTR-1-P) into methylthioribulose-1-phosphate (MTRu-1-P). The sequence is that of Methylthioribose-1-phosphate isomerase from Candida glabrata (strain ATCC 2001 / BCRC 20586 / JCM 3761 / NBRC 0622 / NRRL Y-65 / CBS 138) (Yeast).